Reading from the N-terminus, the 425-residue chain is Serine--tRNA ligase (425 aa).

231 to 233 serves as a coordination point for L-serine; the sequence is TAE. Residue 262-264 participates in ATP binding; sequence RSE. Position 285 (E285) interacts with L-serine. 349-352 serves as a coordination point for ATP; it reads EISS. S385 is a binding site for L-serine.

Belongs to the class-II aminoacyl-tRNA synthetase family. Type-1 seryl-tRNA synthetase subfamily. Homodimer. The tRNA molecule binds across the dimer.

It localises to the cytoplasm. The catalysed reaction is tRNA(Ser) + L-serine + ATP = L-seryl-tRNA(Ser) + AMP + diphosphate + H(+). It carries out the reaction tRNA(Sec) + L-serine + ATP = L-seryl-tRNA(Sec) + AMP + diphosphate + H(+). It participates in aminoacyl-tRNA biosynthesis; selenocysteinyl-tRNA(Sec) biosynthesis; L-seryl-tRNA(Sec) from L-serine and tRNA(Sec): step 1/1. Its function is as follows. Catalyzes the attachment of serine to tRNA(Ser). Is also able to aminoacylate tRNA(Sec) with serine, to form the misacylated tRNA L-seryl-tRNA(Sec), which will be further converted into selenocysteinyl-tRNA(Sec). In Alkaliphilus oremlandii (strain OhILAs) (Clostridium oremlandii (strain OhILAs)), this protein is Serine--tRNA ligase.